The primary structure comprises 293 residues: MSEIGTGFPFDPHYVEVLGERMHYVDVGPRDGTPVLFLHGNPTSSYLWRNIIPHVAPSHRCIAPDLIGMGKSDKPDLDYFFDDHVRYLDAFIEALGLEEVVLVIHDWGSALGFHWAKRNPERVKGIACMEFIRPIPTWDEWPEFARETFQAFRTADVGRELIIDQNAFIEGALPKCVVRPLTEVEMDHYREPFLKPVDREPLWRFPNELPIAGEPANIVALVEAYMNWLHQSPVPKLLFWGTPGVLIPPAEAARLAESLPNCKTVDIGPGLHYLQEDNPDLIGSEIARWLPAL.

Residues 34-158 (PVLFLHGNPT…FQAFRTADVG (125 aa)) form the AB hydrolase-1 domain. Residue D106 is the Nucleophile of the active site. E130 (proton donor) is an active-site residue. H272 functions as the Proton acceptor in the catalytic mechanism.

Belongs to the haloalkane dehalogenase family. Type 2 subfamily. As to quaternary structure, monomer.

The catalysed reaction is 1-haloalkane + H2O = a halide anion + a primary alcohol + H(+). Its pathway is xenobiotic degradation; haloalkane degradation. It participates in xenobiotic degradation; 1,3-dichloropropene degradation. Catalyzes hydrolytic cleavage of carbon-halogen bonds in halogenated aliphatic compounds, leading to the formation of the corresponding primary alcohols, halide ions and protons. Has a broad substrate specificity, as it is able to dehalogenate mono- and di- chlorinated and brominated alkanes (up to at least C10), and the two isomers of 1,3-dichloropropene to 3-chloroallyl alcohol; the highest activity was found with 1,2-dibromoethane, while no activity was observed with the analog 1,2-dichloroethane. In Pseudomonas pavonaceae, this protein is Haloalkane dehalogenase (dhaA).